Reading from the N-terminus, the 236-residue chain is Dense granule protein 7 (236 aa).

Positions 1 to 26 (MARHAIFSALCVLGLVAAALPQFATA) are cleaved as a signal peptide. A disordered region spans residues 45 to 106 (DGQAPVDSLR…EVHFRKRGVR (62 aa)). Over residues 70 to 80 (TTSMDKASVES) the composition is skewed to polar residues. Positions 147–236 (AVGMGASYFA…SGEDGEDARQ (90 aa)) are required for dimerization, interactions with liposomes and liposome tubulation. The chain crosses the membrane as a helical span at residues 181-201 (VGTVLGFAALAAAAAFLGMGL). The segment at 208-236 (FSPRKNRSRQPALEQEVPESGEDGEDARQ) is disordered. N-linked (GlcNAc...) asparagine glycosylation occurs at N213. Residues 223–236 (EVPESGEDGEDARQ) show a composition bias toward acidic residues.

This sequence belongs to the Gra7 family. Homodimer. Can form higher order homooligomers in a lipid-stimulated manner. Component of a complex at least composed of ROP18, GRA7 and ROP2. Interacts with ROP5. Interacts with ROP18 in the absence of ROP5. Interacts with mouse IRGA6/IIGP1 in GTP-dependent manner; the interaction results in faster turnover of the GTP-activated IRGA6/IIGP1 oligomer. Interacts with mouse TRAF6 (via N-terminal RING domain); the interaction plays a role in GRA7-induced pro-inflammatory cytokine production in mouse macrophages.

The protein localises to the secreted. Its subcellular location is the parasitophorous vacuole lumen. It localises to the parasitophorous vacuole membrane. It is found in the cytoplasm. The protein resides in the host cytoplasm. The protein localises to the cytoplasmic vesicle. Its subcellular location is the secretory vesicle. Its function is as follows. Binds lipid bilayers, sequesters host endocytic organelles in the parasitophorous vacuole space, and causes their deformation and remodeling. Plays a role in nutrient acquisition from the host. In complex with ROP18, targets immunity-related GTPases (IRGs) to prevent IRG-mediated parasite killing by mouse cells. Important component within a kinase complex, contributing to phosphorylation of mouse IRGA6/IIGP1, an immunity-related GTPase that protects mice from infection by certain intracellular pathogens, by Toxoplasma gondii ROP5 and ROP18. Induces pro-inflammatory cytokine production in host macrophages. Activates host pro-inflammatory signaling pathways in a MyD88-dependent manner. Triggers generation of reactive oxygen species (ROS) in host cells. Activates MAPK pathway in host cells. Activates host NF-kappa-B signaling pathway by interacting with TRAF6 and modulating the 'Lys-63'-linked polyubiquitination of TRAF6. This Toxoplasma gondii protein is Dense granule protein 7.